Here is a 138-residue protein sequence, read N- to C-terminus: MSGTLLAFDFGTKSIGVAVGQRITGTARPLPAIKAQDGTPDWNIIERLLKEWQPDEIIVGLPLNMDGTEQPLTARARKFANRIHGRFGVEVKLHDERLSTVEARSGLFEQGGYRALNKGKVDSASAVIILESYFEQGY.

Belongs to the YqgF nuclease family.

It is found in the cytoplasm. Functionally, could be a nuclease involved in processing of the 5'-end of pre-16S rRNA. This Escherichia coli O45:K1 (strain S88 / ExPEC) protein is Putative pre-16S rRNA nuclease.